A 562-amino-acid polypeptide reads, in one-letter code: Arginine--tRNA ligase (562 aa).

The 'HIGH' region motif lies at 121–131 (PNIAKPMGMGH).

The protein belongs to the class-I aminoacyl-tRNA synthetase family. In terms of assembly, monomer.

The protein resides in the cytoplasm. It carries out the reaction tRNA(Arg) + L-arginine + ATP = L-arginyl-tRNA(Arg) + AMP + diphosphate. This chain is Arginine--tRNA ligase, found in Limosilactobacillus fermentum (strain NBRC 3956 / LMG 18251) (Lactobacillus fermentum).